The following is a 497-amino-acid chain: Keratin, type II cytoskeletal 8 (497 aa).

Residues 2–108 (TSYQRTVTVR…DPRIGQVRLE (107 aa)) are head. The tract at residues 109-149 (EKEQIKTLNNQFAGFIDKVRYLEQQNKLLETKWQLLQNQTT) is coil 1A. An IF rod domain is found at 109 to 421 (EKEQIKTLNN…KLLEGEESRL (313 aa)). A linker 1 region spans residues 145 to 162 (QNQTTPSRSNLDSMFEAY). The tract at residues 163 to 254 (ISNLRRQLDT…QIYDEEIREL (92 aa)) is coil 1B. The interval 255-278 (QTQIQDTSVIVQMDNNRQLDLDNI) is linker 12. The segment at 279–417 (IAEVRAQYED…ATYRKLLEGE (139 aa)) is coil 2. A tail region spans residues 418–497 (ESRLASGIQA…VSERSNIVKE (80 aa)).

The protein belongs to the intermediate filament family. As to quaternary structure, heterotetramer of two type I and two type II keratins. Keratin-8 associates with keratin-18. As to expression, expressed in skin.

The protein resides in the cytoplasm. Its subcellular location is the nucleus. The protein localises to the nucleoplasm. It is found in the nucleus matrix. Its function is as follows. Together with KRT19, helps to link the contractile apparatus to dystrophin at the costameres of striated muscle. This chain is Keratin, type II cytoskeletal 8, found in Protopterus aethiopicus (Marbled lungfish).